The primary structure comprises 67 residues: Large ribosomal subunit protein uL29 (67 aa).

The protein belongs to the universal ribosomal protein uL29 family.

The polypeptide is Large ribosomal subunit protein uL29 (Methanosarcina barkeri (strain Fusaro / DSM 804)).